The following is a 433-amino-acid chain: Aspartate--tRNA(Asp/Asn) ligase (433 aa).

An L-aspartate-binding site is contributed by E167. The aspartate stretch occupies residues 189-192; sequence QLFK. R211 contacts L-aspartate. ATP-binding positions include 211–213, 219–221, and E356; these read RAE and RHL. E356 and S359 together coordinate Mg(2+). L-aspartate-binding residues include S359 and R363. 404 to 407 is an ATP binding site; that stretch reads GGER.

It belongs to the class-II aminoacyl-tRNA synthetase family. Type 2 subfamily. Homodimer. Requires Mg(2+) as cofactor.

The protein resides in the cytoplasm. The enzyme catalyses tRNA(Asx) + L-aspartate + ATP = L-aspartyl-tRNA(Asx) + AMP + diphosphate. Functionally, aspartyl-tRNA synthetase with relaxed tRNA specificity since it is able to aspartylate not only its cognate tRNA(Asp) but also tRNA(Asn). Reaction proceeds in two steps: L-aspartate is first activated by ATP to form Asp-AMP and then transferred to the acceptor end of tRNA(Asp/Asn). The protein is Aspartate--tRNA(Asp/Asn) ligase of Haloferax volcanii (Halobacterium volcanii).